A 213-amino-acid chain; its full sequence is Protein nullo (213 aa).

Blastoderm. Throughout the entire cortex of the embryo although the distribution is not uniform.

Its function is as follows. Actin-myosin network stability during cellularization. Might be involved in increasing actin-actin interactions or membrane-to-cytoskeleton attachments. nullo together with Sry-a and bnk may provide auxiliary functions, by acting both to stabilize a large and dynamic microfilament structure and regulate its functions. This Drosophila melanogaster (Fruit fly) protein is Protein nullo (nullo).